A 417-amino-acid polypeptide reads, in one-letter code: Gamma-glutamyl phosphate reductase (417 aa).

It belongs to the gamma-glutamyl phosphate reductase family.

It localises to the cytoplasm. It carries out the reaction L-glutamate 5-semialdehyde + phosphate + NADP(+) = L-glutamyl 5-phosphate + NADPH + H(+). Its pathway is amino-acid biosynthesis; L-proline biosynthesis; L-glutamate 5-semialdehyde from L-glutamate: step 2/2. Its function is as follows. Catalyzes the NADPH-dependent reduction of L-glutamate 5-phosphate into L-glutamate 5-semialdehyde and phosphate. The product spontaneously undergoes cyclization to form 1-pyrroline-5-carboxylate. This is Gamma-glutamyl phosphate reductase from Haemophilus influenzae (strain PittEE).